Reading from the N-terminus, the 426-residue chain is Dihydroorotase (426 aa).

Residues H62 and H64 each contribute to the Zn(2+) site. Substrate is bound by residues 64 to 66 (HLR) and N96. Residues D154, H181, and H234 each coordinate Zn(2+). Substrate is bound at residue N280. D307 serves as a coordination point for Zn(2+). The active site involves D307. Substrate contacts are provided by residues H311 and 325 to 326 (FG).

This sequence belongs to the metallo-dependent hydrolases superfamily. DHOase family. Class I DHOase subfamily. Requires Zn(2+) as cofactor.

The catalysed reaction is (S)-dihydroorotate + H2O = N-carbamoyl-L-aspartate + H(+). Its pathway is pyrimidine metabolism; UMP biosynthesis via de novo pathway; (S)-dihydroorotate from bicarbonate: step 3/3. Catalyzes the reversible cyclization of carbamoyl aspartate to dihydroorotate. This Desulforapulum autotrophicum (strain ATCC 43914 / DSM 3382 / VKM B-1955 / HRM2) (Desulfobacterium autotrophicum) protein is Dihydroorotase.